Reading from the N-terminus, the 332-residue chain is L-lactate dehydrogenase A chain (332 aa).

Position 2 is an N-acetylalanine (A2). An N6-acetyllysine; alternate modification is found at K5. An N6-succinyllysine; alternate modification is found at K5. N6-acetyllysine is present on K14. Residue 29–57 participates in NAD(+) binding; sequence GAVGMACAISILMKDLADELALVDVIEDK. Residue K57 is modified to N6-acetyllysine; alternate. A Glycyl lysine isopeptide (Lys-Gly) (interchain with G-Cter in SUMO2); alternate cross-link involves residue K57. At K81 the chain carries N6-acetyllysine. R99 contributes to the NAD(+) binding site. R106 is a substrate binding site. K118 carries the N6-acetyllysine; alternate modification. Residue K118 is modified to N6-succinyllysine; alternate. The residue at position 126 (K126) is an N6-acetyllysine. N138 serves as a coordination point for NAD(+). 2 residues coordinate substrate: N138 and R169. The Proton acceptor role is filled by H193. S213 carries the phosphoserine modification. N6-acetyllysine is present on residues K224 and K232. At Y239 the chain carries Phosphotyrosine. K243 is subject to N6-acetyllysine. Residue T248 participates in substrate binding. Phosphothreonine is present on T309. Position 318 is an N6-acetyllysine; alternate (K318). K318 is modified (N6-succinyllysine; alternate). Residue T322 is modified to Phosphothreonine.

Belongs to the LDH/MDH superfamily. LDH family. In terms of assembly, homotetramer. Interacts with PTEN upstream reading frame protein MP31. In terms of processing, ISGylated.

It is found in the cytoplasm. It carries out the reaction (S)-lactate + NAD(+) = pyruvate + NADH + H(+). It functions in the pathway fermentation; pyruvate fermentation to lactate; (S)-lactate from pyruvate: step 1/1. In terms of biological role, interconverts simultaneously and stereospecifically pyruvate and lactate with concomitant interconversion of NADH and NAD(+). This chain is L-lactate dehydrogenase A chain (Ldha), found in Rattus norvegicus (Rat).